The following is a 100-amino-acid chain: Urease subunit gamma (100 aa).

It belongs to the urease gamma subunit family. Heterotrimer of UreA (gamma), UreB (beta) and UreC (alpha) subunits. Three heterotrimers associate to form the active enzyme.

It is found in the cytoplasm. The enzyme catalyses urea + 2 H2O + H(+) = hydrogencarbonate + 2 NH4(+). The protein operates within nitrogen metabolism; urea degradation; CO(2) and NH(3) from urea (urease route): step 1/1. This is Urease subunit gamma from Pseudomonas fluorescens (strain Pf0-1).